A 215-amino-acid chain; its full sequence is uncharacterized protein (215 aa).

6 consecutive transmembrane segments (helical) span residues 21–40 (IIKYLVIFFLFCIISTVLIN), 50–69 (LIFSVICLLISLIGFSSVIF), 95–117 (FFAIFISSTIGLVFVLPIIYVLF), 122–144 (LEIIFFFSSVWMILVLSSSLVVL), 156–178 (ANFVGTFIMPLLIPNIIMTGLIL), and 183–205 (LQLIFIMIGINLVFLPISFFLSS).

This sequence belongs to the CcmB/CycW/HelB family.

Its subcellular location is the cell membrane. This is an uncharacterized protein from Rickettsia conorii (strain ATCC VR-613 / Malish 7).